A 215-amino-acid polypeptide reads, in one-letter code: Probable transaldolase 1 (215 aa).

The Schiff-base intermediate with substrate role is filled by Lys83.

The protein belongs to the transaldolase family. Type 3B subfamily.

Its subcellular location is the cytoplasm. It carries out the reaction D-sedoheptulose 7-phosphate + D-glyceraldehyde 3-phosphate = D-erythrose 4-phosphate + beta-D-fructose 6-phosphate. The protein operates within carbohydrate degradation; pentose phosphate pathway; D-glyceraldehyde 3-phosphate and beta-D-fructose 6-phosphate from D-ribose 5-phosphate and D-xylulose 5-phosphate (non-oxidative stage): step 2/3. In terms of biological role, transaldolase is important for the balance of metabolites in the pentose-phosphate pathway. The polypeptide is Probable transaldolase 1 (Bacillus anthracis).